The primary structure comprises 162 residues: UPF0305 protein MmarC7_1691 (162 aa).

Belongs to the UPF0305 family.

This Methanococcus maripaludis (strain C7 / ATCC BAA-1331) protein is UPF0305 protein MmarC7_1691.